The chain runs to 160 residues: 17.9 kDa class II heat shock protein (160 aa).

Positions 44-160 constitute a sHSP domain; sequence DARAMAATPA…KPKTIQVQVA (117 aa).

Belongs to the small heat shock protein (HSP20) family.

It localises to the cytoplasm. The polypeptide is 17.9 kDa class II heat shock protein (HSP17.9) (Helianthus annuus (Common sunflower)).